The following is a 241-amino-acid chain: Uridylate kinase (241 aa).

An ATP-binding site is contributed by 14–17 (KLSG). The segment at 22–27 (GGLGMG) is involved in allosteric activation by GTP. G56 serves as a coordination point for UMP. ATP-binding residues include G57 and R61. UMP is bound by residues D77 and 138–145 (TGNPFFTT). ATP is bound by residues T165, Y171, and D174.

Belongs to the UMP kinase family. In terms of assembly, homohexamer.

It is found in the cytoplasm. It catalyses the reaction UMP + ATP = UDP + ADP. Its pathway is pyrimidine metabolism; CTP biosynthesis via de novo pathway; UDP from UMP (UMPK route): step 1/1. With respect to regulation, allosterically activated by GTP. Inhibited by UTP. In terms of biological role, catalyzes the reversible phosphorylation of UMP to UDP. This is Uridylate kinase from Psychrobacter sp. (strain PRwf-1).